The sequence spans 312 residues: Olfactory receptor 2M3 (312 aa).

The Extracellular segment spans residues 1 to 25 (MARENSTFNSDFILLGIFNHSPTHT). An N-linked (GlcNAc...) asparagine glycan is attached at asparagine 5. A helical membrane pass occupies residues 26–49 (FLFFLVLAIFSVAFMGNSVMVLLI). Residues 50–57 (YLDTQLHT) lie on the Cytoplasmic side of the membrane. The chain crosses the membrane as a helical span at residues 58–79 (PMYLLLSQLSLMDLMLICTTVP). Topologically, residues 80-100 (KMAFNYLSGSKSISMAGCATQ) are extracellular. A disulfide bridge links cysteine 97 with cysteine 189. Residues 101–120 (IFFYTSLLGSECFLLAVMAY) traverse the membrane as a helical segment. Topologically, residues 121 to 139 (DRYTAICHPLRYTNLMSPK) are cytoplasmic. A helical transmembrane segment spans residues 140 to 158 (ICGLMTAFSWILGSTDGII). At 159 to 195 (DVVATFSFSYCGSREIAHFFCDFPSLLILSCSDTSIF) the chain is on the extracellular side. Residues 196–219 (EKILFICCIVMIVFPVAIIIASYA) traverse the membrane as a helical segment. Residues 220–236 (RVILAVIHMGSGEGRRK) lie on the Cytoplasmic side of the membrane. Residues 237 to 259 (AFTTCSSHLLVVGMYYGAALFMY) traverse the membrane as a helical segment. Topologically, residues 260-272 (IRPTSDRSPTQDK) are extracellular. Residues 273–292 (MVSVFYTILTPMLNPLIYSL) traverse the membrane as a helical segment. The Cytoplasmic segment spans residues 293-312 (RNKEVTRAFMKILGKGKSGE).

Belongs to the G-protein coupled receptor 1 family.

Its subcellular location is the cell membrane. Odorant receptor. The protein is Olfactory receptor 2M3 (OR2M3) of Homo sapiens (Human).